The primary structure comprises 287 residues: Phosphatidylserine decarboxylase proenzyme (287 aa).

Residues D90, H147, and S253 each act as charge relay system; for autoendoproteolytic cleavage activity in the active site. S253 serves as the catalytic Schiff-base intermediate with substrate; via pyruvic acid; for decarboxylase activity. The residue at position 253 (S253) is a Pyruvic acid (Ser); by autocatalysis.

Belongs to the phosphatidylserine decarboxylase family. PSD-B subfamily. Prokaryotic type I sub-subfamily. Heterodimer of a large membrane-associated beta subunit and a small pyruvoyl-containing alpha subunit. Requires pyruvate as cofactor. In terms of processing, is synthesized initially as an inactive proenzyme. Formation of the active enzyme involves a self-maturation process in which the active site pyruvoyl group is generated from an internal serine residue via an autocatalytic post-translational modification. Two non-identical subunits are generated from the proenzyme in this reaction, and the pyruvate is formed at the N-terminus of the alpha chain, which is derived from the carboxyl end of the proenzyme. The autoendoproteolytic cleavage occurs by a canonical serine protease mechanism, in which the side chain hydroxyl group of the serine supplies its oxygen atom to form the C-terminus of the beta chain, while the remainder of the serine residue undergoes an oxidative deamination to produce ammonia and the pyruvoyl prosthetic group on the alpha chain. During this reaction, the Ser that is part of the protease active site of the proenzyme becomes the pyruvoyl prosthetic group, which constitutes an essential element of the active site of the mature decarboxylase.

It localises to the cell membrane. It carries out the reaction a 1,2-diacyl-sn-glycero-3-phospho-L-serine + H(+) = a 1,2-diacyl-sn-glycero-3-phosphoethanolamine + CO2. It functions in the pathway phospholipid metabolism; phosphatidylethanolamine biosynthesis; phosphatidylethanolamine from CDP-diacylglycerol: step 2/2. Its function is as follows. Catalyzes the formation of phosphatidylethanolamine (PtdEtn) from phosphatidylserine (PtdSer). This Aliivibrio fischeri (strain ATCC 700601 / ES114) (Vibrio fischeri) protein is Phosphatidylserine decarboxylase proenzyme.